We begin with the raw amino-acid sequence, 730 residues long: Wall-associated receptor kinase-like 1 (730 aa).

A signal peptide spans 1–25 (MKTKTSIFQFIVASVLTLLINDSSA). The Extracellular segment spans residues 26 to 358 (ATPPPPISNS…KPTKPPVLQG (333 aa)). N34, N40, N70, N77, N92, N119, N132, N211, N233, N269, and N281 each carry an N-linked (GlcNAc...) asparagine glycan. An atypical EGF-like region spans residues 282-341 (CSCEYDYFSGMSYRNCYCDYGYTGNPYLRGGCVDTDSCEGNHNCGEDAHCVNMPGPMSMC). Intrachain disulfides connect C284–C297, C319–C331, and C325–C341. Residues 359–379 (ILIGLSGLVFFVGLFWLFKLI) traverse the membrane as a helical segment. At 380-730 (KKRRNINRSK…DQPMAINNKR (351 aa)) the chain is on the cytoplasmic side. One can recognise a Protein kinase domain in the interval 429–702 (FSIDRVLGQG…KEVSNELERI (274 aa)). Residues 435 to 443 (LGQGGQGTV) and K457 each bind ATP. Residue Y502 is modified to Phosphotyrosine. The active-site Proton acceptor is D554. Phosphothreonine is present on residues T588 and T593. Residue Y601 is modified to Phosphotyrosine. The interval 685–730 (KGKNRPNMKEVSNELERIRSSPEDLDVRTENEDEEEDQPMAINNKR) is disordered. The span at 691–714 (NMKEVSNELERIRSSPEDLDVRTE) shows a compositional bias: basic and acidic residues.

It belongs to the protein kinase superfamily. Ser/Thr protein kinase family. As to expression, preferentially expressed in roots and flowers.

The protein resides in the membrane. It catalyses the reaction L-seryl-[protein] + ATP = O-phospho-L-seryl-[protein] + ADP + H(+). The catalysed reaction is L-threonyl-[protein] + ATP = O-phospho-L-threonyl-[protein] + ADP + H(+). Serine/threonine-protein kinase that may function as a signaling receptor of extracellular matrix component. The chain is Wall-associated receptor kinase-like 1 (WAKL1) from Arabidopsis thaliana (Mouse-ear cress).